A 369-amino-acid polypeptide reads, in one-letter code: Anhydro-N-acetylmuramic acid kinase (369 aa).

Residue Gly-12 to Asp-19 participates in ATP binding.

Belongs to the anhydro-N-acetylmuramic acid kinase family.

It catalyses the reaction 1,6-anhydro-N-acetyl-beta-muramate + ATP + H2O = N-acetyl-D-muramate 6-phosphate + ADP + H(+). It participates in amino-sugar metabolism; 1,6-anhydro-N-acetylmuramate degradation. It functions in the pathway cell wall biogenesis; peptidoglycan recycling. Its function is as follows. Catalyzes the specific phosphorylation of 1,6-anhydro-N-acetylmuramic acid (anhMurNAc) with the simultaneous cleavage of the 1,6-anhydro ring, generating MurNAc-6-P. Is required for the utilization of anhMurNAc either imported from the medium or derived from its own cell wall murein, and thus plays a role in cell wall recycling. The sequence is that of Anhydro-N-acetylmuramic acid kinase from Escherichia coli O157:H7.